The following is a 349-amino-acid chain: Probable formaldehyde dehydrogenase AdhA (349 aa).

Zn(2+) is bound by residues C44, H66, C97, C100, C103, C111, and C161.

This sequence belongs to the zinc-containing alcohol dehydrogenase family. Zn(2+) serves as cofactor.

In terms of biological role, functions in the protection against aldehyde-stress. In Bacillus subtilis (strain 168), this protein is Probable formaldehyde dehydrogenase AdhA (adhA).